The primary structure comprises 652 residues: Probable serine/threonine-protein kinase mkcD (652 aa).

3 disordered regions span residues 1–47, 163–198, and 257–289; these read MNNI…RKNK, NPIDENDKINSKSINDGDDNGGGSGGGGDNSPLTNV, and QQKLKQEQQQEQQQQQEDEPNKSPVSTSSTLSP. Over residues 182–191 the composition is skewed to gly residues; it reads NGGGSGGGGD. The stretch at 231–275 forms a coiled coil; it reads KNNQNLHHKQQQLQQLQQLKQQHLQQQQKLKQEQQQEQQQQQEDE. Over residues 257 to 271 the composition is skewed to low complexity; sequence QQKLKQEQQQEQQQQ. Positions 279 to 289 are enriched in polar residues; it reads SPVSTSSTLSP. One can recognise a Protein kinase domain in the interval 369-626; the sequence is FKNLDFEARG…SSQLLQHPFL (258 aa). ATP contacts are provided by residues 375 to 383 and lysine 403; that span reads EARGGFGSV. Residue aspartate 494 is the Proton acceptor of the active site.

Belongs to the protein kinase superfamily. STE Ser/Thr protein kinase family. STE20 subfamily. Mg(2+) serves as cofactor.

It carries out the reaction L-seryl-[protein] + ATP = O-phospho-L-seryl-[protein] + ADP + H(+). It catalyses the reaction L-threonyl-[protein] + ATP = O-phospho-L-threonyl-[protein] + ADP + H(+). This Dictyostelium discoideum (Social amoeba) protein is Probable serine/threonine-protein kinase mkcD.